Here is a 1838-residue protein sequence, read N- to C-terminus: Type III effector DspE (1838 aa).

A compositionally biased stretch (basic and acidic residues) spans 1–12 (MELKSLGTEHKA). Disordered stretches follow at residues 1–72 (MELK…AAHQ), 86–163 (KKFS…PTQQ), 182–264 (MAHP…VATP), 281–300 (LEGTDTTQSPLKPQSMLKGS), 398–418 (DGKSGKISLGSGTQSHNKTML), and 1480–1505 (NLAAGSRERSTTSGQFGSTTSASNNR). Residues 27–46 (ALQQGSSSSSPQNAAASLAA) show a composition bias toward low complexity. Positions 91–103 (SAPQGQPGTTHSK) are enriched in polar residues. Over residues 110–120 (LLARDDGETQH) the composition is skewed to basic and acidic residues. Polar residues predominate over residues 407 to 418 (GSGTQSHNKTML). Residues 1480 to 1502 (NLAAGSRERSTTSGQFGSTTSAS) are compositionally biased toward low complexity.

This sequence belongs to the AvrE family. Interacts with the chaperone DspF (DspB/F).

It is found in the secreted. The protein localises to the host cell. Its activity is regulated as follows. Polyamidoamine dendrimers inhibit channel and virulence activities. Its function is as follows. Major virulence factor that may function as a water- and solute-permeable channel dedicated to creating osmotic/water potential perturbation and a water- and nutrient-rich apoplast in which bacteria multiply within the infected plant tissues. Expression in Xenopus oocytes results in inward and outward currents, permeability to water and osmolarity-dependent oocyte swelling and bursting. In terms of biological role, acts as a major cell-death inducer during fire blight, a necrotic disease affecting plants of the rosaceous family, and during hypersensitive response (HR) on non-host plants. Essential for pathogenicity on host plants. Contributes quantitatively and in a strain-dependent fashion to HR elicitation in non-host plants such as tobacco. Induces cell death in leaves of apple, a host plant, and tobacco, a non-host plant. Also triggers necrosis in the widely used model, non-host, N.benthamiana and in yeast. Required for the transient multiplication and survival of E.amylovora in non-host A.thaliana leaves. In A.thaliana, triggers electrolyte leakage, activation of defense pathways, reactive oxygen species (ROS) accumulation and cell death. The toxicity of DspE in A.thaliana is associated with an early repression of de novo protein synthesis. This Erwinia amylovora (Fire blight bacteria) protein is Type III effector DspE.